A 371-amino-acid chain; its full sequence is COP9 signalosome complex subunit 5 (371 aa).

One can recognise an MPN domain in the interval 51–188; it reads VKISAVALIK…IGAFRTYPEG (138 aa). Zn(2+)-binding residues include H134, H136, and D147. The short motif at 134–147 is the JAMM motif element; that stretch reads HSHPGYGCWLSGID. A compositionally biased stretch (low complexity) spans 278 to 292; it reads NSSSKLKLKPTQPTT. 2 disordered regions span residues 278–333 and 352–371; these read NSSS…SRIT and TPLT…QGRY. Basic and acidic residues predominate over residues 293-313; that stretch reads KGKETTEGSDKKLKKGEKEFS. Positions 323-333 are enriched in polar residues; that stretch reads NKVTQESSRIT.

It belongs to the peptidase M67A family. CSN5 subfamily. In terms of assembly, component of the COP9 signalosome (CSN) complex.

It is found in the cytoplasm. The protein localises to the nucleus. Catalytic Component of the COP9 signalosome (CSN) complex that acts as an regulator of the ubiquitin (Ubl) conjugation pathway by mediating the deneddylation of the cullin subunit of SCF-type E3 ubiquitin-protein ligase complexes. In Cryptococcus neoformans var. neoformans serotype D (strain B-3501A) (Filobasidiella neoformans), this protein is COP9 signalosome complex subunit 5 (RRI1).